The primary structure comprises 123 residues: Small ribosomal subunit protein uS12 (123 aa).

Asp89 is subject to 3-methylthioaspartic acid. Residues 104 to 123 (TAGVKDRKQARSKYGAKRPK) form a disordered region. The segment covering 113–123 (ARSKYGAKRPK) has biased composition (basic residues).

The protein belongs to the universal ribosomal protein uS12 family. Part of the 30S ribosomal subunit. Contacts proteins S8 and S17. May interact with IF1 in the 30S initiation complex.

With S4 and S5 plays an important role in translational accuracy. In terms of biological role, interacts with and stabilizes bases of the 16S rRNA that are involved in tRNA selection in the A site and with the mRNA backbone. Located at the interface of the 30S and 50S subunits, it traverses the body of the 30S subunit contacting proteins on the other side and probably holding the rRNA structure together. The combined cluster of proteins S8, S12 and S17 appears to hold together the shoulder and platform of the 30S subunit. In Neisseria gonorrhoeae (strain ATCC 700825 / FA 1090), this protein is Small ribosomal subunit protein uS12.